The primary structure comprises 444 residues: ATP-dependent protease ATPase subunit HslU (444 aa).

Residues Ile18, 60 to 65 (GVGKTE), Asp256, Glu322, and Arg394 contribute to the ATP site.

Belongs to the ClpX chaperone family. HslU subfamily. In terms of assembly, a double ring-shaped homohexamer of HslV is capped on each side by a ring-shaped HslU homohexamer. The assembly of the HslU/HslV complex is dependent on binding of ATP.

The protein resides in the cytoplasm. Its function is as follows. ATPase subunit of a proteasome-like degradation complex; this subunit has chaperone activity. The binding of ATP and its subsequent hydrolysis by HslU are essential for unfolding of protein substrates subsequently hydrolyzed by HslV. HslU recognizes the N-terminal part of its protein substrates and unfolds these before they are guided to HslV for hydrolysis. This is ATP-dependent protease ATPase subunit HslU from Buchnera aphidicola subsp. Cinara cedri (strain Cc).